The following is a 712-amino-acid chain: Ribosomal RNA large subunit methyltransferase K/L (712 aa).

Residues 46 to 157 form the THUMP domain; sequence GAYQALLHSR…RENMVVSLDL (112 aa).

The protein belongs to the methyltransferase superfamily. RlmKL family.

The protein resides in the cytoplasm. The catalysed reaction is guanosine(2445) in 23S rRNA + S-adenosyl-L-methionine = N(2)-methylguanosine(2445) in 23S rRNA + S-adenosyl-L-homocysteine + H(+). The enzyme catalyses guanosine(2069) in 23S rRNA + S-adenosyl-L-methionine = N(2)-methylguanosine(2069) in 23S rRNA + S-adenosyl-L-homocysteine + H(+). Its function is as follows. Specifically methylates the guanine in position 2445 (m2G2445) and the guanine in position 2069 (m7G2069) of 23S rRNA. This chain is Ribosomal RNA large subunit methyltransferase K/L, found in Actinobacillus pleuropneumoniae serotype 7 (strain AP76).